Reading from the N-terminus, the 423-residue chain is UDP-N-acetylglucosamine 1-carboxyvinyltransferase 2 (423 aa).

23–24 lines the phosphoenolpyruvate pocket; it reads KN. Position 95 (R95) interacts with UDP-N-acetyl-alpha-D-glucosamine. C119 functions as the Proton donor in the catalytic mechanism. A 2-(S-cysteinyl)pyruvic acid O-phosphothioketal modification is found at C119. UDP-N-acetyl-alpha-D-glucosamine contacts are provided by D306 and I328.

It belongs to the EPSP synthase family. MurA subfamily.

The protein localises to the cytoplasm. The enzyme catalyses phosphoenolpyruvate + UDP-N-acetyl-alpha-D-glucosamine = UDP-N-acetyl-3-O-(1-carboxyvinyl)-alpha-D-glucosamine + phosphate. The protein operates within cell wall biogenesis; peptidoglycan biosynthesis. In terms of biological role, cell wall formation. Adds enolpyruvyl to UDP-N-acetylglucosamine. This chain is UDP-N-acetylglucosamine 1-carboxyvinyltransferase 2, found in Symbiobacterium thermophilum (strain DSM 24528 / JCM 14929 / IAM 14863 / T).